We begin with the raw amino-acid sequence, 354 residues long: Protein Wnt-11 (354 aa).

The first 24 residues, 1–24, serve as a signal peptide directing secretion; it reads MRARPQVCEALLFALALHTGVCYG. N-linked (GlcNAc...) asparagine glycans are attached at residues Asn-40 and Asn-90. Disulfide bonds link Cys-80–Cys-91, Cys-130–Cys-138, and Cys-140–Cys-157. Residue Asn-160 is glycosylated (N-linked (GlcNAc...) asparagine). Cystine bridges form between Cys-209–Cys-223, Cys-211–Cys-218, Cys-283–Cys-314, Cys-299–Cys-309, Cys-313–Cys-353, Cys-329–Cys-344, Cys-331–Cys-341, and Cys-336–Cys-337. Ser-215 is lipidated: O-palmitoleoyl serine; by PORCN. Residues Asn-300 and Asn-304 are each glycosylated (N-linked (GlcNAc...) asparagine).

The protein belongs to the Wnt family. Post-translationally, palmitoleoylation is required for efficient binding to frizzled receptors. Depalmitoleoylation leads to Wnt signaling pathway inhibition.

It is found in the secreted. The protein localises to the extracellular space. It localises to the extracellular matrix. In terms of biological role, ligand for members of the frizzled family of seven transmembrane receptors. Probable developmental protein. May be a signaling molecule which affects the development of discrete regions of tissues. Is likely to signal over only few cell diameters. This is Protein Wnt-11 (Wnt11) from Mus musculus (Mouse).